A 415-amino-acid chain; its full sequence is Lupus La protein homolog (415 aa).

The 93-residue stretch at 7 to 99 (NEKMAALEAK…RRSPSRPLPE (93 aa)) folds into the HTH La-type RNA-binding domain. Residues Ser92 and Ser94 each carry the phosphoserine modification. The RRM domain occupies 111–187 (RSVYIKGFPT…TNLLILFKED (77 aa)). Residue Lys116 is modified to N6-acetyllysine. A Phosphothreonine modification is found at Thr120. Lys128 and Lys327 each carry N6-acetyllysine. Positions 226–343 (EGKMGCLLKF…HAARRFKGSH (118 aa)) constitute a xRRM domain. A disordered region spans residues 323 to 415 (ESLNKWKSKG…KKRENGARDK (93 aa)). Positions 328–341 (WKSKGGHAARRFKG) are enriched in basic residues. N6-acetyllysine is present on Lys356. Thr377 carries the post-translational modification Phosphothreonine. The segment covering 377–415 (TRFDDDDHRRGPVKRGIDGRDREEPASKHKKRENGARDK) has biased composition (basic and acidic residues).

In terms of assembly, interacts with DDX15. May interact with RUFY1. Phosphorylated.

The protein localises to the nucleus. In terms of biological role, binds to the 3' poly(U) terminus of nascent RNA polymerase III transcripts, protecting them from exonuclease digestion and facilitating their folding and maturation. This chain is Lupus La protein homolog (Ssb), found in Rattus norvegicus (Rat).